A 393-amino-acid chain; its full sequence is Acetate kinase (393 aa).

Residue N7 participates in Mg(2+) binding. Position 14 (K14) interacts with ATP. Substrate is bound at residue R87. Catalysis depends on D144, which acts as the Proton donor/acceptor. ATP contacts are provided by residues 202–206 (HIGNG), 277–279 (DLR), and 326–330 (GVGEN). E380 contributes to the Mg(2+) binding site.

This sequence belongs to the acetokinase family. As to quaternary structure, homodimer. Requires Mg(2+) as cofactor. Mn(2+) serves as cofactor.

The protein resides in the cytoplasm. The catalysed reaction is acetate + ATP = acetyl phosphate + ADP. It participates in metabolic intermediate biosynthesis; acetyl-CoA biosynthesis; acetyl-CoA from acetate: step 1/2. Functionally, catalyzes the formation of acetyl phosphate from acetate and ATP. Can also catalyze the reverse reaction. This Mycoplasmopsis pulmonis (strain UAB CTIP) (Mycoplasma pulmonis) protein is Acetate kinase.